Consider the following 48-residue polypeptide: Toxin CSTX-15 (48 aa).

4 disulfides stabilise this stretch: C3–C18, C10–C27, C17–C42, and C29–C40.

This sequence belongs to the neurotoxin 19 (CSTX) family. 12 subfamily. As to quaternary structure, heterodimer of A and B chains; disulfide-linked. Post-translationally, contains 4 disulfide bonds. Expressed by the venom gland.

It localises to the secreted. This is Toxin CSTX-15 from Cupiennius salei (American wandering spider).